A 336-amino-acid chain; its full sequence is MAGQESLTLAGVLRGHNDMVTAIAAPIDNSPFIVSSSRDKSLLVWDITNPSTAVATDPEAAPPEYGVSYRRLTGHSHFVQDVVLSSDGQFALSGSWDGELRLWDLATGRTTRRFVGHTKDVLSVAFSVDNRQIVSAARDNTIKLWNTLGECKYTIGGDHGAGEGHTGWVSCVRFSPNPMAPTIVSGSWDRSVKVWNLTNCKLRTKLEGHNGYVNAVAVSPDGSLCASGGKDGTTLLWDLTEGKMLYKLDAGAIIHSLCFSPNRYWLCAATEDSVKIWDLESKLVMQDLKPEVQAFKSQMLYCTSLSWSADGSTLFAGYTDGTIRVWKVSGFGGYAI.

WD repeat units follow at residues 15 to 55 (GHND…TAVA), 74 to 113 (GHSH…TTRR), 116 to 155 (GHTK…KYTI), 164 to 205 (GHTG…LRTK), 208 to 247 (GHNG…MLYK), 249 to 287 (DAGA…VMQD), and 297 to 336 (SQML…GYAI).

This sequence belongs to the WD repeat G protein beta family. Ribosomal protein RACK1 subfamily. As to quaternary structure, homodimer and heterodimer with RACK1A.

Functionally, component of the RACK1 regulatory proteins that play a role in multiple signal transduction pathways. The chain is Small ribosomal subunit protein RACK1y (RACK1B) from Oryza sativa subsp. japonica (Rice).